The following is an 881-amino-acid chain: Fanconi anemia core complex-associated protein 100 (881 aa).

Residues 94-119 are disordered; the sequence is GRSRSTSQDDRDSEDGDQPSPVIPVD. At S667 the chain carries Phosphoserine.

In terms of assembly, belongs to the multisubunit FA complex composed of FANCA, FANCB, FANCC, FANCE, FANCF, FANCG, FANCL/PHF9, FANCM, FAAP24 and FAAP100. Forms a subcomplex with FANCB and FANCL.

The protein localises to the nucleus. In terms of biological role, plays a role in Fanconi anemia-associated DNA damage response network. Regulates FANCD2 monoubiquitination and the stability of the FA core complex. Induces chromosomal instability as well as hypersensitivity to DNA cross-linking agents, when repressed. This is Fanconi anemia core complex-associated protein 100 from Homo sapiens (Human).